Reading from the N-terminus, the 240-residue chain is Probable transcriptional regulatory protein MXAN_7062 (240 aa).

It belongs to the TACO1 family.

Its subcellular location is the cytoplasm. In Myxococcus xanthus (strain DK1622), this protein is Probable transcriptional regulatory protein MXAN_7062.